Consider the following 500-residue polypeptide: Glycerol kinase (500 aa).

Thr17 provides a ligand contact to ADP. ATP is bound by residues Thr17, Thr18, and Ser19. Thr17 lines the sn-glycerol 3-phosphate pocket. Residue Arg21 coordinates ADP. Residues Arg87, Glu88, Tyr139, and Asp243 each coordinate sn-glycerol 3-phosphate. Glycerol contacts are provided by Arg87, Glu88, Tyr139, Asp243, and Gln244. Residues Thr265 and Gly308 each coordinate ADP. The ATP site is built by Thr265, Gly308, Gln312, and Gly409. Residues Gly409 and Asn413 each contribute to the ADP site.

This sequence belongs to the FGGY kinase family.

The enzyme catalyses glycerol + ATP = sn-glycerol 3-phosphate + ADP + H(+). It participates in polyol metabolism; glycerol degradation via glycerol kinase pathway; sn-glycerol 3-phosphate from glycerol: step 1/1. Inhibited by fructose 1,6-bisphosphate (FBP). Key enzyme in the regulation of glycerol uptake and metabolism. Catalyzes the phosphorylation of glycerol to yield sn-glycerol 3-phosphate. The polypeptide is Glycerol kinase (Pseudomonas fluorescens (strain Pf0-1)).